The sequence spans 200 residues: MKLKTIMSKCEFMIGATHIKSLPDFSIPEIAIAGRSNVGKSSLINAITNNKKNAKTSSKPGCTKQINFYLINKDFMVLVDLPGYGYSKADKTTINNYLCLMEYYLLNSRNLLKVILLIDAKVGFKEIDLDFINWLELHQIHYQLVLTKIDKIKKEMLDVNVNYIKNLNLDFIMYPIISTSSQCKQGIEELIYEIAQCIKK.

The EngB-type G domain maps to 26–200 (SIPEIAIAGR…IYEIAQCIKK (175 aa)). GTP-binding positions include 34-41 (GRSNVGKS), 61-65 (GCTKQ), 80-83 (DLPG), 147-150 (TKID), and 179-181 (TSS). The Mg(2+) site is built by serine 41 and threonine 63.

This sequence belongs to the TRAFAC class TrmE-Era-EngA-EngB-Septin-like GTPase superfamily. EngB GTPase family. Mg(2+) serves as cofactor.

In terms of biological role, necessary for normal cell division and for the maintenance of normal septation. In Ehrlichia chaffeensis (strain ATCC CRL-10679 / Arkansas), this protein is Probable GTP-binding protein EngB.